The primary structure comprises 320 residues: Malate dehydrogenase (320 aa).

Residues 10–15 and aspartate 34 each bind NAD(+); that span reads GAGQIG. Substrate-binding residues include arginine 83 and arginine 89. Residues asparagine 96 and 119-121 each bind NAD(+); that span reads ITN. Substrate is bound by residues asparagine 121 and arginine 152. Histidine 176 acts as the Proton acceptor in catalysis.

This sequence belongs to the LDH/MDH superfamily. MDH type 3 family.

The catalysed reaction is (S)-malate + NAD(+) = oxaloacetate + NADH + H(+). Its function is as follows. Catalyzes the reversible oxidation of malate to oxaloacetate. The protein is Malate dehydrogenase of Cereibacter sphaeroides (strain ATCC 17025 / ATH 2.4.3) (Rhodobacter sphaeroides).